We begin with the raw amino-acid sequence, 706 residues long: Polyribonucleotide nucleotidyltransferase (706 aa).

The Mg(2+) site is built by Asp-487 and Asp-493. The KH domain occupies 553–612 (PRLFTMKISQDKIRDVIGKGGETIRSITAETGTEINIAEDGTITIAATTQEAGDAAKKRI). In terms of domain architecture, S1 motif spans 622–692 (GKVYEGTVVK…DRGRVRLSIK (71 aa)).

This sequence belongs to the polyribonucleotide nucleotidyltransferase family. It depends on Mg(2+) as a cofactor.

The protein resides in the cytoplasm. The catalysed reaction is RNA(n+1) + phosphate = RNA(n) + a ribonucleoside 5'-diphosphate. Functionally, involved in mRNA degradation. Catalyzes the phosphorolysis of single-stranded polyribonucleotides processively in the 3'- to 5'-direction. The polypeptide is Polyribonucleotide nucleotidyltransferase (Neisseria gonorrhoeae (strain ATCC 700825 / FA 1090)).